The primary structure comprises 576 residues: Aspartate--tRNA ligase, cytoplasmic 1 (576 aa).

Positions 1–78 (MSETTPVPVG…NWGELPMNQS (78 aa)) are disordered. The segment covering 20–43 (LKKEQKKLEKEKKIAEAKAKKAAE) has biased composition (basic and acidic residues). Residue Glu302 coordinates L-aspartate. The aspartate stretch occupies residues 324–327 (QLYK). Residue Arg346 coordinates L-aspartate. ATP-binding positions include 346–348 (RAE), 354–356 (RHL), and Glu499. Residues Ser502 and Arg506 each contribute to the L-aspartate site. 547-550 (GLER) is a binding site for ATP.

Belongs to the class-II aminoacyl-tRNA synthetase family. Type 2 subfamily.

Its subcellular location is the cytoplasm. The enzyme catalyses tRNA(Asp) + L-aspartate + ATP = L-aspartyl-tRNA(Asp) + AMP + diphosphate. The protein is Aspartate--tRNA ligase, cytoplasmic 1 (aspS1) of Dictyostelium discoideum (Social amoeba).